Here is a 666-residue protein sequence, read N- to C-terminus: Translation factor guf1, mitochondrial (666 aa).

Residues 1-43 (MRGCLQLARWLRAAPKCPAASLLKPPSGLANPARFFTTSTACW) constitute a mitochondrion transit peptide. One can recognise a tr-type G domain in the interval 68 to 248 (DRYRNFCIVA…TVVEKIPAPV (181 aa)). GTP-binding positions include 77–84 (AHVDHGKS), 141–145 (DTPGH), and 195–198 (NKVD).

Belongs to the TRAFAC class translation factor GTPase superfamily. Classic translation factor GTPase family. LepA subfamily.

It localises to the mitochondrion inner membrane. It carries out the reaction GTP + H2O = GDP + phosphate + H(+). Promotes mitochondrial protein synthesis. May act as a fidelity factor of the translation reaction, by catalyzing a one-codon backward translocation of tRNAs on improperly translocated ribosomes. Binds to mitochondrial ribosomes in a GTP-dependent manner. The polypeptide is Translation factor guf1, mitochondrial (guf1) (Aspergillus niger (strain ATCC MYA-4892 / CBS 513.88 / FGSC A1513)).